Reading from the N-terminus, the 407-residue chain is Glucose-1-phosphate adenylyltransferase 2 (407 aa).

Alpha-D-glucose 1-phosphate-binding positions include Tyr97, Gly162, 177 to 178 (EK), and Ser195.

This sequence belongs to the bacterial/plant glucose-1-phosphate adenylyltransferase family. In terms of assembly, homotetramer.

The enzyme catalyses alpha-D-glucose 1-phosphate + ATP + H(+) = ADP-alpha-D-glucose + diphosphate. It functions in the pathway glycan biosynthesis; glycogen biosynthesis. Functionally, involved in the biosynthesis of ADP-glucose, a building block required for the elongation reactions to produce glycogen. Catalyzes the reaction between ATP and alpha-D-glucose 1-phosphate (G1P) to produce pyrophosphate and ADP-Glc. The protein is Glucose-1-phosphate adenylyltransferase 2 of Vibrio cholerae serotype O1 (strain ATCC 39315 / El Tor Inaba N16961).